The primary structure comprises 535 residues: GMP synthase [glutamine-hydrolyzing] (535 aa).

Residues 4–210 form the Glutamine amidotransferase type-1 domain; sequence KILILDFGSQ…VHEICHCKPD (207 aa). The Nucleophile role is filled by C85. Catalysis depends on residues H184 and E186. Residues 211-403 enclose the GMPS ATP-PPase domain; it reads WVMGDYIAEA…LGLPREMVYR (193 aa). 238–244 contributes to the ATP binding site; sequence SGGVDSS.

Homodimer.

It carries out the reaction XMP + L-glutamine + ATP + H2O = GMP + L-glutamate + AMP + diphosphate + 2 H(+). Its pathway is purine metabolism; GMP biosynthesis; GMP from XMP (L-Gln route): step 1/1. Functionally, catalyzes the synthesis of GMP from XMP. The sequence is that of GMP synthase [glutamine-hydrolyzing] from Polynucleobacter asymbioticus (strain DSM 18221 / CIP 109841 / QLW-P1DMWA-1) (Polynucleobacter necessarius subsp. asymbioticus).